Here is a 313-residue protein sequence, read N- to C-terminus: R2-like ligand binding oxidase (313 aa).

Mn(2+) contacts are provided by E68, E101, and H104. Positions 71–162 (VTQDIQPFMS…AAQVRASVTY (92 aa)) form a cross-link, 3-(O4'-tyrosyl)-valine (Val-Tyr). E101 provides a ligand contact to Fe cation. 3 residues coordinate Fe cation: E167, E202, and H205.

The protein belongs to the ribonucleoside diphosphate reductase small chain family. R2-like ligand binding oxidase subfamily. In terms of assembly, homodimer. Fe cation serves as cofactor. Requires Mn(2+) as cofactor.

Its function is as follows. Probable oxidase that might be involved in lipid metabolism. This chain is R2-like ligand binding oxidase, found in Mycobacteroides abscessus (strain ATCC 19977 / DSM 44196 / CCUG 20993 / CIP 104536 / JCM 13569 / NCTC 13031 / TMC 1543 / L948) (Mycobacterium abscessus).